We begin with the raw amino-acid sequence, 219 residues long: GTP cyclohydrolase-2 (219 aa).

51–55 is a GTP binding site; sequence RIHSE. Cys-56, Cys-67, and Cys-69 together coordinate Zn(2+). GTP-binding positions include Gln-72, 94-96, and Thr-116; that span reads EGR. Asp-128 functions as the Proton acceptor in the catalytic mechanism. Residue Arg-130 is the Nucleophile of the active site. Residues Thr-151 and Lys-156 each contribute to the GTP site.

It belongs to the GTP cyclohydrolase II family. Zn(2+) serves as cofactor.

It carries out the reaction GTP + 4 H2O = 2,5-diamino-6-hydroxy-4-(5-phosphoribosylamino)-pyrimidine + formate + 2 phosphate + 3 H(+). It functions in the pathway cofactor biosynthesis; riboflavin biosynthesis; 5-amino-6-(D-ribitylamino)uracil from GTP: step 1/4. Functionally, catalyzes the conversion of GTP to 2,5-diamino-6-ribosylamino-4(3H)-pyrimidinone 5'-phosphate (DARP), formate and pyrophosphate. The chain is GTP cyclohydrolase-2 from Pasteurella multocida (strain Pm70).